A 278-amino-acid polypeptide reads, in one-letter code: DegV domain-containing protein YejH (278 aa).

One can recognise a DegV domain in the interval I3–Y277. T60 and S92 together coordinate hexadecanoate.

Functionally, may bind long-chain fatty acids, such as palmitate, and may play a role in lipid transport or fatty acid metabolism. This Lactococcus lactis subsp. lactis (strain IL1403) (Streptococcus lactis) protein is DegV domain-containing protein YejH (yejH).